A 268-amino-acid polypeptide reads, in one-letter code: Putative hydro-lyase PSPTO_5379 (268 aa).

This sequence belongs to the D-glutamate cyclase family.

This chain is Putative hydro-lyase PSPTO_5379, found in Pseudomonas syringae pv. tomato (strain ATCC BAA-871 / DC3000).